Reading from the N-terminus, the 131-residue chain is Profilin (131 aa).

The protein belongs to the profilin family. Occurs in many kinds of cells as a complex with monomeric actin in a 1:1 ratio.

It localises to the cytoplasm. The protein localises to the cytoskeleton. In terms of biological role, binds to actin and affects the structure of the cytoskeleton. At high concentrations, profilin prevents the polymerization of actin, whereas it enhances it at low concentrations. By binding to PIP2, it inhibits the formation of IP3 and DG. This chain is Profilin, found in Capsicum annuum (Capsicum pepper).